The sequence spans 968 residues: uncharacterized protein (968 aa).

5 disordered regions span residues 124-177, 348-437, 572-595, 608-627, and 837-877; these read SSIS…FSFP, QEDS…VNDS, TTTT…QQNT, PKAS…GSSK, and KASK…KKGK. Polar residues predominate over residues 131–157; it reads TIESNYLSNPSSPCQSTPILESSTPFS. 3 stretches are compositionally biased toward low complexity: residues 158–177, 352–431, and 572–593; these read QKLM…FSFP, NNNN…NCNN, and TTTT…QQQQ. The segment covering 841–857 has biased composition (low complexity); sequence DSSSSPTASSAAPGDSS.

This is an uncharacterized protein from Dictyostelium discoideum (Social amoeba).